Reading from the N-terminus, the 644-residue chain is L-aspartate oxidase 2-a, chloroplastic (644 aa).

Residues 94–97 (SGIA), lysine 116, 123–130 (NTNYAQGG), and aspartate 294 each bind FAD. Catalysis depends on arginine 369, which acts as the Proton donor/acceptor. FAD contacts are provided by residues glutamate 454 and 470–471 (SL).

Belongs to the FAD-dependent oxidoreductase 2 family. NadB subfamily. It depends on FAD as a cofactor.

The protein localises to the plastid. Its subcellular location is the chloroplast. It catalyses the reaction L-aspartate + O2 = iminosuccinate + H2O2. It functions in the pathway alkaloid biosynthesis; nicotine biosynthesis. It participates in cofactor biosynthesis; NAD(+) biosynthesis; iminoaspartate from L-aspartate (oxidase route): step 1/1. Involved in the biosynthesis of pyridine alkaloid natural products, leading mainly to the production of anabasine, anatabine, nicotine and nornicotine, effective deterrents against herbivores with antiparasitic and pesticide properties (neurotoxins); nornicotine serves as the precursor in the synthesis of the carcinogen compound N'-nitrosonornicotine (NNN). Catalyzes the oxidation of L-aspartate to iminoaspartate. The sequence is that of L-aspartate oxidase 2-a, chloroplastic from Nicotiana tabacum (Common tobacco).